We begin with the raw amino-acid sequence, 198 residues long: Cell division protein SepF (198 aa).

The segment at 170 to 198 (EVPQPPARPARPASTNPPAWGNETNRMAQ) is disordered. A compositionally biased stretch (low complexity) spans 179–188 (ARPASTNPPA).

Belongs to the SepF family. In terms of assembly, homodimer. Interacts with FtsZ.

The protein resides in the cytoplasm. In terms of biological role, cell division protein that is part of the divisome complex and is recruited early to the Z-ring. Probably stimulates Z-ring formation, perhaps through the cross-linking of FtsZ protofilaments. Its function overlaps with FtsA. The protein is Cell division protein SepF of Nostoc sp. (strain PCC 7120 / SAG 25.82 / UTEX 2576).